We begin with the raw amino-acid sequence, 280 residues long: Bifunctional protein FolD (280 aa).

Residues 158 to 160 (GES), Ile-183, and Ile-222 each bind NADP(+).

It belongs to the tetrahydrofolate dehydrogenase/cyclohydrolase family. In terms of assembly, homodimer.

The enzyme catalyses (6R)-5,10-methylene-5,6,7,8-tetrahydrofolate + NADP(+) = (6R)-5,10-methenyltetrahydrofolate + NADPH. It catalyses the reaction (6R)-5,10-methenyltetrahydrofolate + H2O = (6R)-10-formyltetrahydrofolate + H(+). Its pathway is one-carbon metabolism; tetrahydrofolate interconversion. Catalyzes the oxidation of 5,10-methylenetetrahydrofolate to 5,10-methenyltetrahydrofolate and then the hydrolysis of 5,10-methenyltetrahydrofolate to 10-formyltetrahydrofolate. The polypeptide is Bifunctional protein FolD (Mycoplasma mobile (strain ATCC 43663 / 163K / NCTC 11711) (Mesomycoplasma mobile)).